A 1295-amino-acid chain; its full sequence is Nonribosomal peptide synthetase resC (1295 aa).

The tract at residues 1-24 (MDLTTTSHARVDSGGVPFTSSLND) is disordered. Residues 221-624 (KDVVDASPQA…EGRKDTQIKL (404 aa)) are adenylation. In terms of domain architecture, Carrier spans 759–836 (ESANPAEENL…DQANLLRPLV (78 aa)). At S796 the chain carries O-(pantetheine 4'-phosphoryl)serine. Residues 873–1284 (EDVYPCTPYQ…DEYSQTLHEL (412 aa)) are condensation.

Belongs to the NRP synthetase family. The cofactor is pantetheine 4'-phosphate.

It catalyses the reaction restrictinol + glycine + H(+) = restricticin + H2O. It functions in the pathway antifungal biosynthesis. Its function is as follows. Nonribosomal peptide synthetase; part of the gene cluster that mediates the biosynthesis of the tetrahydropyranyl antifungal agent restricticin that acts as an inhibitor of CYP51 and blocks the ergosterol biosynthesis. Within the pathway, resC catalyzes the C3 esterification of restrictinol with glycine to yield restricticin. ResC represents an example of the emerging class of single-module NRPS-like enzymes that perform esterification reactions. The highly reducing polyketide synthase resH, the short chain dehydrogenase resG, the cyclase resF, the FAD-dependent monooxygenase resA and the enoylreductase resD are required to generate the first stable intermediate desmethylrestrictinol. ResH with resD biosynthesize the first polyketide chain intermediate that is reduced by resG, followed by epoxidation by resA before 6-endo cyclization via epoxide opening by resF leads to desmethylrestrictinol. The methyltransferase resE then catalyzes the C4 O-methylation of desmethylrestrictinol to produce restrictinol, and the nonribosomal peptide synthetase resC catalyzes the C3 esterification of restrictinol with glycine that leads to restricticin. The sequence is that of Nonribosomal peptide synthetase resC from Aspergillus sclerotiorum.